A 287-amino-acid chain; its full sequence is Glucose import system permease protein GlcU (287 aa).

7 helical membrane-spanning segments follow: residues histidine 14 to isoleucine 34, isoleucine 76 to phenylalanine 96, valine 113 to leucine 133, isoleucine 149 to isoleucine 169, isoleucine 194 to alanine 214, phenylalanine 218 to leucine 238, and aspartate 250 to glycine 270. Residues leucine 71 to leucine 269 enclose the ABC transmembrane type-1 domain.

It belongs to the binding-protein-dependent transport system permease family. In terms of assembly, the complex is composed of two ATP-binding proteins (GlcV), two transmembrane proteins (GlcT and GlcU) and a solute-binding protein (GlcS).

It localises to the cell membrane. Part of the ABC transporter complex GlcSTUV involved in glucose uptake. Responsible for the translocation of the substrate across the membrane. The polypeptide is Glucose import system permease protein GlcU (Saccharolobus solfataricus (strain ATCC 35092 / DSM 1617 / JCM 11322 / P2) (Sulfolobus solfataricus)).